The following is a 291-amino-acid chain: 33 kDa chaperonin (291 aa).

2 disulfides stabilise this stretch: cysteine 237-cysteine 239 and cysteine 270-cysteine 273.

The protein belongs to the HSP33 family. Under oxidizing conditions two disulfide bonds are formed involving the reactive cysteines. Under reducing conditions zinc is bound to the reactive cysteines and the protein is inactive.

Its subcellular location is the cytoplasm. Its function is as follows. Redox regulated molecular chaperone. Protects both thermally unfolding and oxidatively damaged proteins from irreversible aggregation. Plays an important role in the bacterial defense system toward oxidative stress. This is 33 kDa chaperonin from Bacillus mycoides (strain KBAB4) (Bacillus weihenstephanensis).